The sequence spans 152 residues: ASP external chaperone (152 aa).

An N-terminal signal peptide occupies residues 1 to 22 (MNKPVTLLLATLLAPLSGQLCA).

Forms a complex with the serine protease ASP in the periplasm. After translocation of the ASP-ORF2 complex from the periplasm to the extracellular space, the complex is dissociated in a pH-dependent manner.

It localises to the periplasm. Its subcellular location is the secreted. Degraded by ASP after secretion and dissociation of the ASP-ORF2 complex. Required for the production of the active form of the Aeromonas extracellular serine protease (ASP). Acts as a chaperone that helps ASP form an active structure in the periplasm. Formation of a complex with ASP in the periplasm also inactivates the protease activity and likely protects ASP from intrinsic proteases. Dissociation of the ASP-ORF2 complex after secretion in the extracellular space generates an active ASP. This chain is ASP external chaperone, found in Aeromonas sobria.